We begin with the raw amino-acid sequence, 185 residues long: MRLLILTCLVAVALARPKLPLRYPERLQNPSESSEPIPLESREEYMNGMNRQRNILREKQTDEIKDTRNESTQNCVVAEPEKMESSISSSSEEMSLSKCAEQFCRLNEYNQLQLQAAHAQEQIRRMNENSHVQVPFQQLNQLAAYPYAVWYYPQIMQYVPFPPFSDISNPTAHENYEKNNVMLQW.

The N-terminal stretch at 1 to 15 is a signal peptide; it reads MRLLILTCLVAVALA. Residues Ser-31, Ser-33, Ser-41, Ser-71, Ser-85, Ser-86, Ser-88, Ser-89, Ser-90, and Ser-91 each carry the phosphoserine modification.

Belongs to the alpha-casein family. In terms of assembly, heteromultimers of alpha-s1 casein and kappa-casein; disulfide-linked. Not glycosylated. As to expression, mammary gland specific. Secreted in milk.

Its subcellular location is the secreted. Its function is as follows. Important role in the capacity of milk to transport calcium phosphate. In terms of biological role, casoxin D acts as opioid antagonist and has vasorelaxing activity mediated by bradykinin B1 receptors. The polypeptide is Alpha-S1-casein (CSN1S1) (Homo sapiens (Human)).